Reading from the N-terminus, the 511-residue chain is Histidine ammonia-lyase (511 aa).

Positions 142-144 (ASG) form a cross-link, 5-imidazolinone (Ala-Gly). At S143 the chain carries 2,3-didehydroalanine (Ser).

It belongs to the PAL/histidase family. Post-translationally, contains an active site 4-methylidene-imidazol-5-one (MIO), which is formed autocatalytically by cyclization and dehydration of residues Ala-Ser-Gly.

The protein resides in the cytoplasm. It catalyses the reaction L-histidine = trans-urocanate + NH4(+). The protein operates within amino-acid degradation; L-histidine degradation into L-glutamate; N-formimidoyl-L-glutamate from L-histidine: step 1/3. This is Histidine ammonia-lyase from Brucella suis biovar 1 (strain 1330).